The sequence spans 317 residues: Methionyl-tRNA formyltransferase (317 aa).

S112 to P115 is a binding site for (6S)-5,6,7,8-tetrahydrofolate.

It belongs to the Fmt family.

The enzyme catalyses L-methionyl-tRNA(fMet) + (6R)-10-formyltetrahydrofolate = N-formyl-L-methionyl-tRNA(fMet) + (6S)-5,6,7,8-tetrahydrofolate + H(+). Functionally, attaches a formyl group to the free amino group of methionyl-tRNA(fMet). The formyl group appears to play a dual role in the initiator identity of N-formylmethionyl-tRNA by promoting its recognition by IF2 and preventing the misappropriation of this tRNA by the elongation apparatus. This is Methionyl-tRNA formyltransferase from Mycoplasma capricolum subsp. capricolum (strain California kid / ATCC 27343 / NCTC 10154).